The primary structure comprises 510 residues: Internal alternative NAD(P)H-ubiquinone oxidoreductase A1, mitochondrial (510 aa).

The N-terminal 48 residues, 1 to 48, are a transit peptide targeting the mitochondrion; the sequence is MLWIKNLARISQTTSSSVGNVFRNPESYTLSSRFCTALQKQQVTDTVQ. Position 75–105 (75–105) interacts with FAD; it reads RVLVLGSGWAGCRVLKGIDTSIYDVVCVSPR. 242-278 is a binding site for NAD(+); it reads LHCVVVGGGPTGVEFSGELSDFIMKDVRQRYSHVKDD. Residues 501 to 510 carry the Microbody targeting signal motif; sequence FVFGRDISRI.

This sequence belongs to the NADH dehydrogenase family. FAD is required as a cofactor. In terms of tissue distribution, expressed in seedlings, cotyledons, young leaves, stems and flowers and, to a lower extent, in roots and buds.

Its subcellular location is the mitochondrion inner membrane. It is found in the peroxisome. The enzyme catalyses a quinone + NADH + H(+) = a quinol + NAD(+). The catalysed reaction is a ubiquinone + NADH + H(+) = a ubiquinol + NAD(+). Its function is as follows. Alternative NADH-ubiquinone oxidoreductase which catalyzes the oxidation of mitochondrial NADH does not translocate protons across the inner mitochondrial membrane. The sequence is that of Internal alternative NAD(P)H-ubiquinone oxidoreductase A1, mitochondrial (NDA1) from Arabidopsis thaliana (Mouse-ear cress).